The following is a 217-amino-acid chain: Small ribosomal subunit protein uS3 (217 aa).

One can recognise a KH type-2 domain in the interval I38–K106.

Belongs to the universal ribosomal protein uS3 family. Part of the 30S ribosomal subunit. Forms a tight complex with proteins S10 and S14.

In terms of biological role, binds the lower part of the 30S subunit head. Binds mRNA in the 70S ribosome, positioning it for translation. The sequence is that of Small ribosomal subunit protein uS3 from Lactococcus lactis subsp. cremoris (strain MG1363).